A 209-amino-acid polypeptide reads, in one-letter code: FAS-associated death domain protein (209 aa).

In terms of domain architecture, DED spans proline 3–aspartate 81. In terms of domain architecture, Death spans leucine 97–glutamine 181. The segment covering glutamine 187–aspartate 200 has biased composition (polar residues). The disordered stretch occupies residues glutamine 187–serine 209.

Can self-associate. Component of the AIM2 PANoptosome complex, a multiprotein complex that drives inflammatory cell death (PANoptosis). Component of the death-induced signaling complex (DISC) composed of cell surface receptor FAS/CD95 or TNFRSF1A, adapter protein FADD and the CASP8 protease; recruitment of CASP8 to the complex is required for processing of CASP8 into the p18 and p10 subunits. Interacts (via death domain) with FAS (via death domain). Interacts directly (via DED domain) with NOL3 (via CARD domain); inhibits death-inducing signaling complex (DISC) assembly by inhibiting the increase in FAS-FADD binding induced by FAS activation. Interacts with CFLAR, PEA15 and MBD4. When phosphorylated, part of a complex containing HIPK3 and FAS. May interact with MAVS/IPS1. Interacts with MOCV v-CFLAR protein and PIDD1. Interacts with RIPK1 and TRADD. Interacts with stimulated TNFRSF10B. Interacts with DDX24. Post-translationally, phosphorylated.

The protein resides in the cytoplasm. Functionally, apoptotic adapter molecule that recruits caspases CASP8 or CASP10 to the activated FAS/CD95 or TNFRSF1A/TNFR-1 receptors. The resulting aggregate called the death-inducing signaling complex (DISC) performs CASP8 proteolytic activation. Active CASP8 initiates the subsequent cascade of caspases mediating apoptosis. Involved in interferon-mediated antiviral immune response, playing a role in the positive regulation of interferon signaling. The protein is FAS-associated death domain protein of Bos taurus (Bovine).